We begin with the raw amino-acid sequence, 121 residues long: Large ribosomal subunit protein bL12 (121 aa).

It belongs to the bacterial ribosomal protein bL12 family. In terms of assembly, homodimer. Part of the ribosomal stalk of the 50S ribosomal subunit. Forms a multimeric L10(L12)X complex, where L10 forms an elongated spine to which 2 to 4 L12 dimers bind in a sequential fashion. Binds GTP-bound translation factors.

Forms part of the ribosomal stalk which helps the ribosome interact with GTP-bound translation factors. Is thus essential for accurate translation. The polypeptide is Large ribosomal subunit protein bL12 (Clostridium beijerinckii (strain ATCC 51743 / NCIMB 8052) (Clostridium acetobutylicum)).